We begin with the raw amino-acid sequence, 365 residues long: Probable 7-methylxanthine methyltransferase PCS2 (365 aa).

Y19 is an S-adenosyl-L-homocysteine binding site. T26 is a theobromine binding site. S-adenosyl-L-homocysteine contacts are provided by C62, D99, L100, S134, and F135. Residues Y152, H155, and W156 each contribute to the theobromine site. N173 serves as a coordination point for Mg(2+). R221 is a binding site for theobromine. Positions 259, 261, and 262 each coordinate Mg(2+).

The protein belongs to the methyltransferase superfamily. Type-7 methyltransferase family. It depends on Mg(2+) as a cofactor.

It carries out the reaction 7-methylxanthine + S-adenosyl-L-methionine = theobromine + S-adenosyl-L-homocysteine + H(+). No detectable N-methyltransferase activity. This Camellia ptilophylla (Cocoa tea) protein is Probable 7-methylxanthine methyltransferase PCS2.